We begin with the raw amino-acid sequence, 427 residues long: Adenylosuccinate synthetase (427 aa).

Residues 11–17 and 39–41 each bind GTP; these read GDEGKGK and GHT. Asp-12 functions as the Proton acceptor in the catalytic mechanism. The Mg(2+) site is built by Asp-12 and Gly-39. IMP contacts are provided by residues 12–15, 37–40, Thr-132, Arg-146, Gln-223, Thr-238, and Arg-302; these read DEGK and NAGH. Residue His-40 is the Proton donor of the active site. 298-304 provides a ligand contact to substrate; that stretch reads TTTGRPR. GTP contacts are provided by residues Arg-304, 330–332, and 412–414; these read KLD and GVG.

Belongs to the adenylosuccinate synthetase family. Homodimer. Mg(2+) is required as a cofactor.

The protein resides in the cytoplasm. It catalyses the reaction IMP + L-aspartate + GTP = N(6)-(1,2-dicarboxyethyl)-AMP + GDP + phosphate + 2 H(+). It functions in the pathway purine metabolism; AMP biosynthesis via de novo pathway; AMP from IMP: step 1/2. Its function is as follows. Plays an important role in the de novo pathway and in the salvage pathway of purine nucleotide biosynthesis. Catalyzes the first committed step in the biosynthesis of AMP from IMP. This chain is Adenylosuccinate synthetase (purA), found in Dictyostelium discoideum (Social amoeba).